The sequence spans 442 residues: MPKIFRSLYVQVLIAIALGILTGFLFPSLGESLKPLGDGFIKLIKMIIAPIIFATVVSGIAHMRDTKKVGRVGGKALLYFELVTTFALVIGLVIVNILGPGRGMNIDPASLDTSGISKYTDAAGEQTVADFILHIIPDTLISAFTQGDLLQVLLVAVLFGFALLRLGKVGDTILKGIDTVNQVIFVILGFVMRLAPIGAFGAMAFTIGKYGVGSLAQLGYLMITFYATCALFIFGVLGLIARMSGFSILKLIRYIKEELLLVLGTSSSESALPRLMVKLEHAGAEKSVVGLVVPSGYSFNLDGTSIYLTMAAMFIAQATNTELSLGQQLGLLGVLLLTSKGAAGVTGSGFITLAATLSAVGDVPVAGLALILGIDRFMSEARALTNFIGNAVAALVIAKSERAVDVDRLTRALNGEDLPTIEPDVHSEERGEGRELDSLRPA.

Transmembrane regions (helical) follow at residues 10 to 30 (VQVLIAIALGILTGFLFPSLG), 40 to 60 (FIKLIKMIIAPIIFATVVSGI), 77 to 97 (LLYFELVTTFALVIGLVIVNI), 144 to 164 (FTQGDLLQVLLVAVLFGFALL), 183 to 203 (VIFVILGFVMRLAPIGAFGAM), 221 to 241 (LMITFYATCALFIFGVLGLIA), 331 to 351 (LLGVLLLTSKGAAGVTGSGFI), and 354 to 374 (AATLSAVGDVPVAGLALILGI). Residues 418 to 442 (LPTIEPDVHSEERGEGRELDSLRPA) form a disordered region. The segment covering 423–442 (PDVHSEERGEGRELDSLRPA) has biased composition (basic and acidic residues).

Belongs to the dicarboxylate/amino acid:cation symporter (DAACS) (TC 2.A.23) family.

The protein localises to the cell membrane. Responsible for the transport of dicarboxylates such as succinate, fumarate, and malate across the membrane. In Deinococcus deserti (strain DSM 17065 / CIP 109153 / LMG 22923 / VCD115), this protein is C4-dicarboxylate transport protein.